A 2362-amino-acid chain; its full sequence is Filaggrin-2 (2362 aa).

Positions 1–81 (MAYLLRSVVT…TEFILMIFKL (81 aa)) are S-100-like. 2 consecutive EF-hand domains span residues 8–43 (VVTI…EFRP) and 49–84 (DDPD…LALA). Ca(2+) is bound by residues D62, D64, D66, R68, and E73. Disordered stretches follow at residues 96–238 (ASGS…GLSC) and 284–2109 (GCCR…SSIP). Over residues 111-120 (EESETEEEEE) the composition is skewed to acidic residues. 2 stretches are compositionally biased toward basic and acidic residues: residues 159-174 (KRLE…EESR) and 189-214 (NKEK…PSRE). 2 Filaggrin repeats span residues 261–308 (GYNT…NQSC) and 373–414 (HSSC…SNGF). Composition is skewed to polar residues over residues 284-317 (GCCR…CQSG), 342-375 (SCSQ…SHSS), and 383-395 (GATQ…QQRM). Residues 396 to 411 (SSCGHSSSSHQKGCSS) show a composition bias toward low complexity. Polar residues-rich tracts occupy residues 421-443 (ASGS…SSGF) and 450-469 (SGQS…SGYS). Low complexity-rich tracts occupy residues 474–519 (GSGQ…QSSG), 539–550 (GSRQSSGSEQHG), and 567–580 (SQSS…SGSQ). The stretch at 555-607 (QSSGSGKHETGPSQSSSSGHHGSGSQQHGGGSGQSTGFGEHESSSGHSSSSGQ) is one Filaggrin 3 repeat. Residues 581–590 (QHGGGSGQST) are compositionally biased toward gly residues. Positions 599–618 (SGHSSSSGQHRSGSRHSSGS) are enriched in low complexity. The span at 632 to 653 (GHHGSGSQQHGGGSGNSTGFGE) shows a compositional bias: gly residues. Low complexity predominate over residues 654 to 675 (HGSSSHPLPSSGQNESSSGQSS). The stretch at 672 to 723 (GQSSRSERHGTGSGQSSGFGQHGSGSHQSSSSGHNEYGSGQTSSSWPHGKGS) is one Filaggrin 4 repeat. Residues 682–694 (TGSGQSSGFGQHG) are compositionally biased toward gly residues. 3 stretches are compositionally biased toward low complexity: residues 695–705 (SGSHQSSSSGH), 728–754 (GYGE…QSSS), and 780–798 (GYGE…WQHG). The span at 826 to 838 (TGSGQSLGFGQHG) shows a compositional bias: gly residues. The span at 846-864 (SSGHYESVSEPSSSSWQHG) shows a compositional bias: low complexity. Residues 880–927 (HGQSSSAWNHGNESGQSNGYGEHESGHGQSSSAWNHGNESGQSNGFGE) form a Filaggrin 5 repeat. Composition is skewed to polar residues over residues 886–896 (AWNHGNESGQS) and 912–925 (AWNH…SNGF). Positions 973-982 (ESSEGEEHSV) are enriched in basic and acidic residues. The Filaggrin 6 repeat unit spans residues 984–1035 (PRRYSGYGHGQGQAGHQQRESGYGQRGRPQGPSQDSSRQPQAGHGQPSQSGY). Polar residues predominate over residues 1014 to 1035 (GPSQDSSRQPQAGHGQPSQSGY). Basic and acidic residues predominate over residues 1047–1059 (EYSEGEAHSEVSQ). Basic residues predominate over residues 1067-1077 (CHCHCHGQARH). Over residues 1104–1121 (GPGQPSQSGSRRSPRSQP) the composition is skewed to low complexity. Gly residues predominate over residues 1142-1152 (SGHGHGQGQGQ). A compositionally biased stretch (polar residues) spans 1162–1174 (HGQQGRPQGPSQD). A Filaggrin 7 repeat occupies 1165-1210 (QGRPQGPSQDSSRQPQAGQGQPSQSGSGRSPRRSPVHPESSEGEEH). The segment covering 1175–1193 (SSRQPQAGQGQPSQSGSGR) has biased composition (low complexity). Phosphoserine is present on residues S1198, S1204, and S1205. A compositionally biased stretch (gly residues) spans 1220-1232 (SGHGHGQGQGQGQ). Residues 1255–1273 (SSRQPQAGQGQPSQSGSGR) are compositionally biased toward low complexity. Residues S1278, S1284, and S1285 each carry the phosphoserine modification. The stretch at 1280-1334 (VHPESSEGEEHSVVPQRHSGSGHGHGQGQGQAGHQQRESVHGQPVRPEVPTQDSS) is one Filaggrin 8 repeat. Positions 1300-1310 (SGHGHGQGQGQ) are enriched in gly residues. The segment covering 1333-1351 (SSRQPQAGQGQPSQSGSGR) has biased composition (low complexity). Phosphoserine is present on residues S1356, S1362, and S1363. Residues 1377-1396 (ESCHCHCHDQAGHQQRESVH) are compositionally biased toward basic and acidic residues. The span at 1413 to 1436 (PQAGPGQPSQSGSRRSPRSSPVHP) shows a compositional bias: low complexity. S1438 and S1439 each carry phosphoserine. A compositionally biased stretch (gly residues) spans 1454–1464 (SGHGHGQGQGQ). One copy of the Filaggrin 9 repeat lies at 1474–1522 (HGQRGRPQGPTQDSSRQPQAGQGQPSQSGSGRSPRRSPVHPESSEGEEH). Over residues 1487–1505 (SSRQPQAGQGQPSQSGSGR) the composition is skewed to low complexity. Phosphoserine occurs at positions 1510, 1516, and 1517. Residues 1532-1544 (SGHGHGHGQGQGQ) are compositionally biased toward gly residues. Residues 1567-1585 (SSRQPQAGQGQPSQSGSGR) are compositionally biased toward low complexity. Phosphoserine is present on residues S1590, S1596, and S1597. 2 stretches are compositionally biased toward low complexity: residues 1643–1661 (SSRQ…GSGR) and 1683–1696 (QRHS…GQGQ). Residues 1698–1708 (HAEHQQRESVH) are compositionally biased toward basic and acidic residues. A Filaggrin 10 repeat occupies 1723–1756 (RQPQAGQGQPSLSGSGRSPRRSPVHPESSEGEEH). The span at 1724 to 1739 (QPQAGQGQPSLSGSGR) shows a compositional bias: low complexity. S1744, S1750, S1751, S1824, S1830, and S1831 each carry phosphoserine. Low complexity predominate over residues 1801–1825 (SSRQPQAGQGQPSQSGSGRSPGRSP). The span at 1829-1848 (ESSEGEEHSVVPQRHSESGH) shows a compositional bias: basic and acidic residues. Low complexity predominate over residues 1879 to 1897 (SSRQPQAGQGQPSQSGSGR). 3 positions are modified to phosphoserine: S1902, S1908, and S1909. The span at 1924–1934 (SGHGHGQGQGQ) shows a compositional bias: gly residues. The span at 1949-1975 (RPQGPSQDSSSQPQASQGQPSQSGSGR) shows a compositional bias: low complexity. Phosphoserine is present on residues S1980, S1986, and S1987. A compositionally biased stretch (gly residues) spans 2002–2012 (SGHGHGQGQGQ). The stretch at 2016–2070 (QQRESLHGQRGRSQSPFHPSHSIHWQSKCTISKKSSRLSGHYGRNHFQSTISGNQ) is one Filaggrin 11 repeat. Polar residues-rich tracts occupy residues 2026 to 2048 (GRSQ…TISK), 2061 to 2079 (HFQS…SSRH), and 2100 to 2109 (LRSNSQSSIP). S2104 is subject to Phosphoserine. A Filaggrin 12 repeat occupies 2218–2259 (DDSQYILFQKHLESPSFGNQSGFSPNERQLYTCNESIDSYHL).

Belongs to the S100-fused protein family. The protein in the N-terminal section; belongs to the S-100 family. In terms of processing, deiminated by PADI1, PADI2 or PADI3 in vitro. The deiminated form is degraded by calpain-1/CAPN1 more quickly and into shorter peptides than the intact protein. May be processed by calpain-1/CAPN1.

It is found in the cytoplasm. It localises to the cytoplasmic granule. In terms of biological role, essential for normal cell-cell adhesion in the cornified cell layers. Important for proper integrity and mechanical strength of the stratum corneum of the epidermis. In Mus musculus (Mouse), this protein is Filaggrin-2 (Flg2).